Reading from the N-terminus, the 71-residue chain is MAKQSAIEQDGAIIEALSNAMFRVELENGHIVIAHISGKMRMHYIKLLPGDKVKLEMSPYDLSKARITYRY.

Positions 1–71 (MAKQSAIEQD…LSKARITYRY (71 aa)) constitute an S1-like domain.

It belongs to the IF-1 family. As to quaternary structure, component of the 30S ribosomal translation pre-initiation complex which assembles on the 30S ribosome in the order IF-2 and IF-3, IF-1 and N-formylmethionyl-tRNA(fMet); mRNA recruitment can occur at any time during PIC assembly.

Its subcellular location is the cytoplasm. Functionally, one of the essential components for the initiation of protein synthesis. Stabilizes the binding of IF-2 and IF-3 on the 30S subunit to which N-formylmethionyl-tRNA(fMet) subsequently binds. Helps modulate mRNA selection, yielding the 30S pre-initiation complex (PIC). Upon addition of the 50S ribosomal subunit IF-1, IF-2 and IF-3 are released leaving the mature 70S translation initiation complex. In Flavobacterium psychrophilum (strain ATCC 49511 / DSM 21280 / CIP 103535 / JIP02/86), this protein is Translation initiation factor IF-1.